Here is a 120-residue protein sequence, read N- to C-terminus: Protein ORF-C (120 aa).

The protein localises to the host mitochondrion. In terms of biological role, induces alteration of mitochondrial function that results in apoptosis contributing to tumor regression. This is Protein ORF-C (orfC) from Walleye dermal sarcoma virus (WDSV).